Consider the following 687-residue polypeptide: Polyphosphate kinase (687 aa).

Residue asparagine 45 participates in ATP binding. Arginine 375 and arginine 405 together coordinate Mg(2+). The active-site Phosphohistidine intermediate is histidine 435. ATP-binding residues include tyrosine 472, arginine 568, and histidine 596.

This sequence belongs to the polyphosphate kinase 1 (PPK1) family. Mg(2+) is required as a cofactor. Post-translationally, an intermediate of this reaction is the autophosphorylated ppk in which a phosphate is covalently linked to a histidine residue through a N-P bond.

It carries out the reaction [phosphate](n) + ATP = [phosphate](n+1) + ADP. Functionally, catalyzes the reversible transfer of the terminal phosphate of ATP to form a long-chain polyphosphate (polyP). This chain is Polyphosphate kinase, found in Burkholderia ambifaria (strain ATCC BAA-244 / DSM 16087 / CCUG 44356 / LMG 19182 / AMMD) (Burkholderia cepacia (strain AMMD)).